We begin with the raw amino-acid sequence, 403 residues long: MRRNDLLNNKITIFLSSLSLFVIIIPIYAAEKDLLPPSTSSETFLTDEDFLRPLNDDETFLTEKDFKNGEKLGEDHVPAGSILWKQVYKKGDIRGKAAWKLDPKNSESLRRNGVITGTRKWPNGRIPYVISNQYNDRERAVLARSFQAYHDKTCVRFVPRTAVDNDYLYIGKIDGCYSDVGRAGGRQELSLDNGCLQYDTAIHELMHSVGFYHEHERWDRDEHITILWHNIDREAYDQFGKVDLAESSYYGQLYDYYSIMHYDSLAFSKNGFETMVAKQSEMTAVIGAAIDFSPIDILKMNLMYQCSDVKLPPTVVGTTDKTIVPVPAPSVTVVEDDCRDRTNLCWRWIDRCKSFFFEQIMKEFCSLSCGYCTPKALQTAKASPPNYSNTLLTKSSTSYLQHG.

The signal sequence occupies residues 1-29 (MRRNDLLNNKITIFLSSLSLFVIIIPIYA). The propeptide occupies 30 to 111 (AEKDLLPPST…DPKNSESLRR (82 aa)). Positions 112–307 (NGVITGTRKW…LKMNLMYQCS (196 aa)) constitute a Peptidase M12A domain. Disulfide bonds link Cys154/Cys306, Cys176/Cys195, Cys338/Cys372, Cys345/Cys365, and Cys352/Cys369. His203 contacts Zn(2+). Glu204 is an active-site residue. 2 residues coordinate Zn(2+): His207 and His213. In terms of domain architecture, ShKT spans 338–372 (CRDRTNLCWRWIDRCKSFFFEQIMKEFCSLSCGYC). An N-linked (GlcNAc...) asparagine glycan is attached at Asn386.

Zn(2+) is required as a cofactor.

Its subcellular location is the secreted. It catalyses the reaction Hydrolysis of peptide bonds in substrates containing five or more amino acids, preferentially with Ala in P1', and Pro in P2'.. Functionally, metalloprotease. This Caenorhabditis elegans protein is Zinc metalloproteinase nas-8 (nas-8).